The sequence spans 124 residues: Small ribosomal subunit protein uS12 (124 aa).

Asp89 carries the 3-methylthioaspartic acid modification. The disordered stretch occupies residues 104–124; the sequence is ATGVKDRKQGRSKYGAKRPKE. Basic residues predominate over residues 113–124; that stretch reads GRSKYGAKRPKE.

Belongs to the universal ribosomal protein uS12 family. In terms of assembly, part of the 30S ribosomal subunit. Contacts proteins S8 and S17. May interact with IF1 in the 30S initiation complex.

In terms of biological role, with S4 and S5 plays an important role in translational accuracy. Functionally, interacts with and stabilizes bases of the 16S rRNA that are involved in tRNA selection in the A site and with the mRNA backbone. Located at the interface of the 30S and 50S subunits, it traverses the body of the 30S subunit contacting proteins on the other side and probably holding the rRNA structure together. The combined cluster of proteins S8, S12 and S17 appears to hold together the shoulder and platform of the 30S subunit. This chain is Small ribosomal subunit protein uS12, found in Picosynechococcus sp. (strain ATCC 27264 / PCC 7002 / PR-6) (Agmenellum quadruplicatum).